Here is a 660-residue protein sequence, read N- to C-terminus: MGLQTTKWPGRGAFILKFWLIISLGLYLQVSKLLACPSVCRCDRNFVYCNERSLTSVPLGIPEGVTVLYLHNNQINNAGFPAELHNVQSVHTVYLYGNQLDEFPMNLPKNVRVLHLQENNIQTISRAALAQLLKLEELHLDDNSISTVGVEDGAFREAISLKLLFLSKNHLSSVPVGLPVDLQELRVDENRIAVISDMAFQNLTSLERLIVDGNLLTNKGIAEGTFSHLTKLKEFSIVRNSLSHPPPDLPGTHLIRLYLQDNQINHIPLTAFANLRKLERLDISNNQLRMLTQGVFDHLSNLKQLTARNNPWFCDCSIKWVTEWLKYIPSSLNVRGFMCQGPEQVRGMAVRELNMNLLSCPTTTPGLPVFTPAPSTVSPTTQSPTLSVPSPSRGSVPPAPTPSKLPTIPDWDGRERVTPPISERIQLSIHFVNDTSIQVSWLSLFTVMAYKLTWVKMGHSLVGGIVQERIVSGEKQHLSLVNLEPRSTYRICLVPLDAFNYRTVEDTICSEATTHASYLNNGSNTASSHEQTTSHSMGSPFLLAGLIGGAVIFVLVVLLSVFCWHMHKKGRYTSQKWKYNRGRRKDDYCEAGTKKDNSILEMTETSFQIVSLNNDQLLKGDFRLQPIYTPNGGINYTDCHIPNNMRYCNSSVPDLEHCHT.

Positions 1–35 are cleaved as a signal peptide; it reads MGLQTTKWPGRGAFILKFWLIISLGLYLQVSKLLA. Intrachain disulfides connect C36–C42 and C40–C49. Residues 36-63 form the LRRNT domain; the sequence is CPSVCRCDRNFVYCNERSLTSVPLGIPE. Residues 36–540 are Extracellular-facing; it reads CPSVCRCDRN…QTTSHSMGSP (505 aa). LRR repeat units follow at residues 62 to 87, 88 to 108, 109 to 131, 132 to 157, 159 to 181, 183 to 202, 203 to 228, 229 to 251, 252 to 274, and 275 to 298; these read PEGVTVLYLHNNQINNAGFPAELHNV, QSVHTVYLYGNQLDEFPMNLP, KNVRVLHLQENNIQTISRAALAQ, LLKLEELHLDDNSISTVGVEDGAFRE, ISLKLLFLSKNHLSSVPVGLPVD, QELRVDENRIAVISDMAFQN, LTSLERLIVDGNLLTNKGIAEGTFSH, LTKLKEFSIVRNSLSHPPPDLPG, THLIRLYLQDNQINHIPLTAFAN, and LRKLERLDISNNQLRMLTQGVFDH. N202 carries N-linked (GlcNAc...) asparagine glycosylation. An LRRCT domain is found at 310–362; sequence NPWFCDCSIKWVTEWLKYIPSSLNVRGFMCQGPEQVRGMAVRELNMNLLSCPT. 2 disulfide bridges follow: C314-C339 and C316-C360. Residues 371-396 are compositionally biased toward low complexity; sequence TPAPSTVSPTTQSPTLSVPSPSRGSV. A disordered region spans residues 371–413; that stretch reads TPAPSTVSPTTQSPTLSVPSPSRGSVPPAPTPSKLPTIPDWDG. The region spanning 419–517 is the Fibronectin type-III domain; it reads PPISERIQLS…ICSEATTHAS (99 aa). Residues 541-561 form a helical membrane-spanning segment; that stretch reads FLLAGLIGGAVIFVLVVLLSV. At 562–660 the chain is on the cytoplasmic side; it reads FCWHMHKKGR…SVPDLEHCHT (99 aa).

As to quaternary structure, self-associates (via leucine-rich repeats), giving rise to homooligomers. Interacts with FGFR1. Interacts with FGFR2. Interacts (via extracellular domain) with ADGRL1/LPHN1. Interacts (via extracellular domain) with ADGRL3 (via olfactomedin-like domain). Interacts (via extracellular domain) with UNC5D (via the first Ig-like domain). Can also interact (via extracellular domain) with UNC5B, but with much lower affinity. Interacts (via extracellular domain) with FN1. Post-translationally, N-glycosylated. In terms of processing, proteolytic cleavage in the juxtamembrane region gives rise to a soluble ectodomain. Cleavage is probably effected by a metalloprotease. Detected in adult brain (at protein level).

It localises to the cell membrane. It is found in the endoplasmic reticulum membrane. Its subcellular location is the cell junction. The protein resides in the focal adhesion. The protein localises to the secreted. It localises to the extracellular space. It is found in the extracellular matrix. Its subcellular location is the synapse. The protein resides in the synaptosome. The protein localises to the microsome membrane. Its function is as follows. Functions in cell-cell adhesion, cell migration and axon guidance. Mediates cell-cell adhesion via its interactions with ADGRL3 and probably also other latrophilins that are expressed at the surface of adjacent cells. May play a role in the migration of cortical neurons during brain development via its interaction with UNC5D. Mediates axon growth cone collapse and plays a repulsive role in neuron guidance via its interaction with UNC5D, and possibly also other UNC-5 family members. Plays a role in fibroblast growth factor-mediated signaling cascades. Required for normal organization of the cardiac basement membrane during embryogenesis, and for normal embryonic epicardium and heart morphogenesis. The chain is Leucine-rich repeat transmembrane protein FLRT2 from Mus musculus (Mouse).